The following is a 1125-amino-acid chain: Transient receptor potential cation channel subfamily A member 1 (1125 aa).

At 1 to 721 (MKRSLRRVLR…KWCAYGFRAH (721 aa)) the chain is on the cytoplasmic side. ANK repeat units lie at residues 63-94 (ENLCLLHHAAAEGQVELMQLIINGSSCEALNV), 98-127 (YGNTPLHWAAEKNQVESVKFLLSQGANPNL), 131-161 (NMMAPLHIAVQGMYNEVIKVLTEHKATNINL), 165-194 (NGNTALMSTCAKDNSEALQILLEKGAKLCK), 198-227 (WGDYPVHQAAFSGAKRCMELILAYGEKTGY), 239-268 (KKASPLHLAVQSGDLDMIKMCLDSGAHIDM), 272-301 (AKCMALHFAATQGATDIVKLMISSYTGSSD), 309-338 (NQETLLHRASLFDHHDLADYLISVGADINS), and 342-371 (EGRSPLILATASASWNIVNLLLSKGAKVDI). Cystine bridges form between Cys-193–Cys-666, Cys-463–Cys-666, Cys-609–Cys-622, Cys-622–Cys-666, and Cys-634–Cys-859. Position 395 is a 4-hydroxyproline; transient (Pro-395). ANK repeat units follow at residues 413–442 (DGCTPLHYACRQGAPVSVNNLLRFNVSVHS), 446–475 (DKKSPLHFAASYGRINTCQRLLQDISDTRL), 482–511 (HGMTPLHLAAKNGHDKVVQLLLKKGALFLS), 514–543 (NGWTALHHASMGGYTQTMKVILDTNLKCTD), and 548–577 (EGNTALHFAAREGHAKAVAMLLSYNADILL). (E)-cinnamaldehyde contacts are provided by Cys-415 and Cys-422. Cys-622 lines the (E)-cinnamaldehyde pocket. Cys-634 carries the post-translational modification Cysteine sulfenic acid (-SOH); transient; in hyperoxia. Cys-642, Cys-666, and Lys-712 together coordinate (E)-cinnamaldehyde. A helical membrane pass occupies residues 722-742 (MMNLGSYCLGLIPMTLLVVKI). Residues 743-767 (QPGMAFNSTGIINETISTHEERINT) lie on the Extracellular side of the membrane. Residues Asn-749 and Asn-755 are each glycosylated (N-linked (GlcNAc...) asparagine). Residues 768-788 (LNSFPLKICMILVFLSSIFGY) traverse the membrane as a helical segment. The Cytoplasmic portion of the chain corresponds to 789 to 806 (CKEVVQIFQQKRNYFLDY). Glu-791, Gln-794, Asn-808, and Glu-811 together coordinate Ca(2+). Residues 807–827 (NNALEWVIYTTSMIFVLPLFL) traverse the membrane as a helical segment. Topologically, residues 828–832 (DIPAY) are extracellular. The chain crosses the membrane as a helical span at residues 833 to 853 (MQWQCGAIAIFFYWMNFLLYL). Topologically, residues 854–876 (QRFENCGIFIVMLEVIFKTLLRS) are cytoplasmic. Position 859 is a cysteine sulfenic acid (-SOH); transient; in hyperoxia (Cys-859). Residues 877–897 (TGVFIFLLLAFGLSFYVLLNF) form a helical membrane-spanning segment. Topologically, residues 898-904 (QDAFSTP) are extracellular. The pore-forming intramembrane region spans 905-925 (LLSLIQTFSMMLGDINYRDAF). Residues 926-937 (LEPLFRNELAYP) lie on the Extracellular side of the membrane. Residues 938–959 (VLTFGQLIAFTMFVPIVLMNLL) form a helical membrane-spanning segment. Over 960-1125 (IGLAVGDIAE…THCSISHPDI (166 aa)) the chain is Cytoplasmic. Positions 1044–1073 (MEILKQKYRLKDLTSLLEKQHELIKLIIQK) form a coiled coil. Residue 1048-1054 (KQKYRLK) coordinates a 1,2-diacyl-sn-glycero-3-phospho-(1D-myo-inositol).

The protein belongs to the transient receptor (TC 1.A.4) family. As to quaternary structure, homotetramer. Interacts with TMEM100. Interacts with EGLN1. Interacts with the scorpion wasabi receptor toxin at the same site that electrophiles but in a non-covalent manner. TRPA1 activation by electrophiles occurs though covalent modification of specific cysteine residues in the N-terminal cytoplasmic domain. In terms of processing, hydroxylation is required for TRPA1 activity inhibition in normoxia. In hypoxia, the decrease in oxygen concentration diminishes the activity of the hydroxylase EGLN1, thus relieving TRPA1 from inhibition and ultimately leading to channel activation. Post-translationally, oxidation of Cys-634 and Cys-859 in hyperoxia may override the hydroxylase EGLN1-mediated inhibition, causing TRPA1 activation. In terms of tissue distribution, specifically expressed in a subset of nociceptive neurons. Expressed in dorsal root ganglia.

It localises to the cell membrane. It carries out the reaction Ca(2+)(in) = Ca(2+)(out). The enzyme catalyses Mg(2+)(in) = Mg(2+)(out). The catalysed reaction is Na(+)(in) = Na(+)(out). It catalyses the reaction K(+)(in) = K(+)(out). It carries out the reaction Zn(2+)(in) = Zn(2+)(out). Its activity is regulated as follows. Electrophilic ligands activate the channel by covalent modification of intracellular cysteines; Cys-622 plays a key role in covalent binding of electrophiles. Extracellular Ca(2+) both potentiates and inactivates TRPA1; a rapid potentiation follows by slow desensitization. Activated by increase in intracellular Ca(2+) concentration. Inhibited by ruthenium red, a potent blocker of TRPV channels and selectively by A-967079. Activated by benzyl isothiocyanate (BITC), iodoacetamide, sulfhydryl reactive agent MTSEA, N-methyl maleimide (NMM), N-ethylmaleimide (NEM), and 2-aminoethyldiphenylborinate (2-APB). Also activated by hyperoxia. Acivated by intracellular Zn(2+). TRPA1 activation may critically depend on the presence of small intracellular compounds such as polyphosphates. Ligand-activated Ca(2+)-permeable, nonselective cation channel. Involved in pain detection and possibly also in cold perception, oxygen concentration perception, cough, itch, and inner ear function. Has a relatively high Ca(2+) selectivity, with a preference for divalent over monovalent cations (Ca(2+) &gt; Ba(2+) &gt; Mg(2+) &gt; NH4(+) &gt; Li(+) &gt; K(+)), the influx of cation into the cytoplasm, leads to membrane depolarization. Has a central role in the pain response to endogenous inflammatory mediators, such as bradykinin and to a diverse array of irritants. Activated by a large variety of structurally unrelated electrophilic and non-electrophilic chemical compounds, such as allylthiocyanate (AITC) from mustard oil or wasabi, cinnamaldehyde, diallyl disulfide (DADS) from garlic, and acrolein, an environmental irritant. Electrophilic ligands activate TRPA1 by interacting with critical N-terminal Cys residues in a covalent manner. Non-electrophile agonists bind at distinct sites in the transmembrane domain to promote channel activation. Also acts as an ionotropic cannabinoid receptor by being activated by delta(9)-tetrahydrocannabinol (THC), the psychoactive component of marijuana. May be a component for the mechanosensitive transduction channel of hair cells in inner ear, thereby participating in the perception of sounds. The sequence is that of Transient receptor potential cation channel subfamily A member 1 from Rattus norvegicus (Rat).